The chain runs to 241 residues: Pyridoxine 5'-phosphate synthase (241 aa).

Position 7 (asparagine 7) interacts with 3-amino-2-oxopropyl phosphate. 9-10 (DH) serves as a coordination point for 1-deoxy-D-xylulose 5-phosphate. Arginine 18 is a binding site for 3-amino-2-oxopropyl phosphate. The active-site Proton acceptor is the histidine 43. Positions 45 and 50 each coordinate 1-deoxy-D-xylulose 5-phosphate. Residue glutamate 70 is the Proton acceptor of the active site. 1-deoxy-D-xylulose 5-phosphate is bound at residue threonine 100. Residue histidine 191 is the Proton donor of the active site. Residues glycine 192 and 213–214 (GH) contribute to the 3-amino-2-oxopropyl phosphate site.

The protein belongs to the PNP synthase family. Homooctamer; tetramer of dimers.

It localises to the cytoplasm. It catalyses the reaction 3-amino-2-oxopropyl phosphate + 1-deoxy-D-xylulose 5-phosphate = pyridoxine 5'-phosphate + phosphate + 2 H2O + H(+). It participates in cofactor biosynthesis; pyridoxine 5'-phosphate biosynthesis; pyridoxine 5'-phosphate from D-erythrose 4-phosphate: step 5/5. Functionally, catalyzes the complicated ring closure reaction between the two acyclic compounds 1-deoxy-D-xylulose-5-phosphate (DXP) and 3-amino-2-oxopropyl phosphate (1-amino-acetone-3-phosphate or AAP) to form pyridoxine 5'-phosphate (PNP) and inorganic phosphate. This Acidithiobacillus ferrooxidans (strain ATCC 23270 / DSM 14882 / CIP 104768 / NCIMB 8455) (Ferrobacillus ferrooxidans (strain ATCC 23270)) protein is Pyridoxine 5'-phosphate synthase.